The primary structure comprises 409 residues: Tryptophan synthase beta chain (409 aa).

Lys98 bears the N6-(pyridoxal phosphate)lysine mark.

It belongs to the TrpB family. Tetramer of two alpha and two beta chains. Requires pyridoxal 5'-phosphate as cofactor.

It catalyses the reaction (1S,2R)-1-C-(indol-3-yl)glycerol 3-phosphate + L-serine = D-glyceraldehyde 3-phosphate + L-tryptophan + H2O. The protein operates within amino-acid biosynthesis; L-tryptophan biosynthesis; L-tryptophan from chorismate: step 5/5. The beta subunit is responsible for the synthesis of L-tryptophan from indole and L-serine. The protein is Tryptophan synthase beta chain (trpB) of Cereibacter sphaeroides (strain ATCC 17023 / DSM 158 / JCM 6121 / CCUG 31486 / LMG 2827 / NBRC 12203 / NCIMB 8253 / ATH 2.4.1.) (Rhodobacter sphaeroides).